Consider the following 309-residue polypeptide: Small ribosomal subunit biogenesis GTPase RsgA (309 aa).

Residues 88–247 form the CP-type G domain; it reads KNLITRPPVA…IADTPGFNKP (160 aa). GTP contacts are provided by residues 137–140 and 189–197; these read TKRD and GPSGVGKSS. Zn(2+)-binding residues include C272, C277, H279, and C285.

Belongs to the TRAFAC class YlqF/YawG GTPase family. RsgA subfamily. As to quaternary structure, monomer. Associates with 30S ribosomal subunit, binds 16S rRNA. Zn(2+) serves as cofactor.

The protein localises to the cytoplasm. One of several proteins that assist in the late maturation steps of the functional core of the 30S ribosomal subunit. Helps release RbfA from mature subunits. May play a role in the assembly of ribosomal proteins into the subunit. Circularly permuted GTPase that catalyzes slow GTP hydrolysis, GTPase activity is stimulated by the 30S ribosomal subunit. The sequence is that of Small ribosomal subunit biogenesis GTPase RsgA from Prochlorococcus marinus (strain SARG / CCMP1375 / SS120).